The following is a 172-amino-acid chain: Fimbrial-like protein FimF (172 aa).

A signal peptide spans Met1–Ala21. Cysteines 41 and 81 form a disulfide.

The protein belongs to the fimbrial protein family.

The protein resides in the fimbrium. The sequence is that of Fimbrial-like protein FimF (fimF) from Salmonella typhimurium (strain LT2 / SGSC1412 / ATCC 700720).